An 87-amino-acid polypeptide reads, in one-letter code: Small ribosomal subunit protein bS20 (87 aa).

Positions 1–22 (MANSAGSKKRARQAVKSRAHNG) are disordered. Residues 7 to 19 (SKKRARQAVKSRA) show a composition bias toward basic residues.

It belongs to the bacterial ribosomal protein bS20 family.

Its function is as follows. Binds directly to 16S ribosomal RNA. The chain is Small ribosomal subunit protein bS20 from Marinomonas sp. (strain MWYL1).